A 345-amino-acid chain; its full sequence is uncharacterized protein (345 aa).

Residue M1 is a domain, TBDR plug. A TBDR beta-barrel domain is found at 1 to 345; that stretch reads MDLGPIYNTR…EVILNTKIEF (345 aa). The short motif at 328-345 is the TonB C-terminal box element; sequence PVALGYAREVILNTKIEF.

The protein belongs to the TonB-dependent receptor family.

Its subcellular location is the cell outer membrane. This is an uncharacterized protein from Haemophilus influenzae (strain ATCC 51907 / DSM 11121 / KW20 / Rd).